Here is a 250-residue protein sequence, read N- to C-terminus: Global transcriptional regulator CodY (250 aa).

The GAF domain stretch occupies residues 1–147 (MSTLLEKTRK…GATVVGLEIL (147 aa)). Positions 195–214 (ASKIADKVGITRSVIVNALR) form a DNA-binding region, H-T-H motif.

It belongs to the CodY family.

It localises to the cytoplasm. DNA-binding global transcriptional regulator which is involved in the adaptive response to starvation and acts by directly or indirectly controlling the expression of numerous genes in response to nutrient availability. During rapid exponential growth, CodY is highly active and represses genes whose products allow adaptation to nutrient depletion. This chain is Global transcriptional regulator CodY, found in Thermoanaerobacter sp. (strain X514).